We begin with the raw amino-acid sequence, 341 residues long: Limbic system-associated membrane protein (341 aa).

An N-terminal signal peptide occupies residues 1–28; it reads MVGRVQPDRKQLPLVLLRLLCLLPTGLP. Ig-like domains lie at 29–122, 132–214, and 219–304; these read VRSV…PKTS, PKIS…VKVT, and PTIT…ASLV. N-linked (GlcNAc...) asparagine glycans are attached at residues Asn-40 and Asn-66. A disulfide bridge links Cys-53 with Cys-111. Residue Tyr-94 is modified to Phosphotyrosine. N-linked (GlcNAc...) asparagine glycosylation is found at Asn-136 and Asn-148. Intrachain disulfides connect Cys-153/Cys-197 and Cys-239/Cys-290. Residues Asn-279, Asn-287, and Asn-300 are each glycosylated (N-linked (GlcNAc...) asparagine).

It belongs to the immunoglobulin superfamily. IgLON family.

The protein localises to the cell membrane. Mediates selective neuronal growth and axon targeting. Contributes to the guidance of developing axons and remodeling of mature circuits in the limbic system. Essential for normal growth of the hippocampal mossy fiber projection. The sequence is that of Limbic system-associated membrane protein (Lsamp) from Mus musculus (Mouse).